A 243-amino-acid polypeptide reads, in one-letter code: MTLKPLILIPARMGSTRLPEKVLAEISGKPMIVHVAERAKEAALGPTIIATDHDAIAQAVTAYGHEYVMTHTHHQSGSDRIYEALTRIDPEQRYNAILNVQGDLPTVTPNALISVLQLLKNNLTDIATLGAEIIEDNEKNNPNIVKIIGTPIAQNRLRALYFTRATAPYGNGPLYHHIGLYAYRRKALEKFVSLKPSTLEQREKLEQLRALENNMRIDVEIVDTALLGVDTHHDLEKVRKILA.

The protein belongs to the KdsB family.

Its subcellular location is the cytoplasm. The enzyme catalyses 3-deoxy-alpha-D-manno-oct-2-ulosonate + CTP = CMP-3-deoxy-beta-D-manno-octulosonate + diphosphate. It functions in the pathway nucleotide-sugar biosynthesis; CMP-3-deoxy-D-manno-octulosonate biosynthesis; CMP-3-deoxy-D-manno-octulosonate from 3-deoxy-D-manno-octulosonate and CTP: step 1/1. The protein operates within bacterial outer membrane biogenesis; lipopolysaccharide biosynthesis. In terms of biological role, activates KDO (a required 8-carbon sugar) for incorporation into bacterial lipopolysaccharide in Gram-negative bacteria. The sequence is that of 3-deoxy-manno-octulosonate cytidylyltransferase from Bartonella bacilliformis (strain ATCC 35685 / KC583 / Herrer 020/F12,63).